The following is a 106-amino-acid chain: ATP-dependent Clp protease adapter protein ClpS (106 aa).

Residues 1-22 (MTDEPNQDDPQGPEVEAAKPSL) form a disordered region.

The protein belongs to the ClpS family. Binds to the N-terminal domain of the chaperone ClpA.

Its function is as follows. Involved in the modulation of the specificity of the ClpAP-mediated ATP-dependent protein degradation. This chain is ATP-dependent Clp protease adapter protein ClpS, found in Halorhodospira halophila (strain DSM 244 / SL1) (Ectothiorhodospira halophila (strain DSM 244 / SL1)).